Consider the following 167-residue polypeptide: UPF0598 protein CG30010 (167 aa).

The protein belongs to the UPF0598 family.

The protein is UPF0598 protein CG30010 of Drosophila melanogaster (Fruit fly).